We begin with the raw amino-acid sequence, 351 residues long: N-acetyl-gamma-glutamyl-phosphate reductase (351 aa).

Cys-154 is a catalytic residue.

This sequence belongs to the NAGSA dehydrogenase family. Type 1 subfamily.

It localises to the cytoplasm. It catalyses the reaction N-acetyl-L-glutamate 5-semialdehyde + phosphate + NADP(+) = N-acetyl-L-glutamyl 5-phosphate + NADPH + H(+). Its pathway is amino-acid biosynthesis; L-arginine biosynthesis; N(2)-acetyl-L-ornithine from L-glutamate: step 3/4. In terms of biological role, catalyzes the NADPH-dependent reduction of N-acetyl-5-glutamyl phosphate to yield N-acetyl-L-glutamate 5-semialdehyde. The protein is N-acetyl-gamma-glutamyl-phosphate reductase of Prochlorococcus marinus (strain AS9601).